Consider the following 67-residue polypeptide: Metallothionein-A (67 aa).

This sequence belongs to the metallothionein superfamily. Type 4 family.

Its function is as follows. Metallothioneins have a high content of cysteine residues that bind various heavy metals. This chain is Metallothionein-A, found in Sphaerechinus granularis (Purple sea urchin).